The chain runs to 241 residues: Agamous-like MADS-box protein AP1 (241 aa).

An MADS-box domain is found at 1-61; that stretch reads MGRGRVQLKR…GKLFEYSTDS (61 aa). One can recognise a K-box domain in the interval 88-178; that stretch reads QGNWSLEYSK…AKEIKEKEKT (91 aa).

As to expression, expressed in tendrils and flowers.

It localises to the nucleus. In terms of biological role, probable transcription factor involved in flower development. This chain is Agamous-like MADS-box protein AP1, found in Vitis vinifera (Grape).